Here is an 847-residue protein sequence, read N- to C-terminus: MVDAITEFVVGKIDNYLIEEAPMLIGVKDDLEELKTELTCIQVYLKNVEVCDKEDEVSKEWTKLVLDIAYDVEDVLDTYFLKLEKRLHRLGLMRLTNIISDKKDAYNILDDIKTLKRRTLDVTRKLEMYGIGNFNEHRVVASTSRVREVRRARSDDQEERVVGLTDDAKVLLTKLLDDDGDNKIYMISIFGMEGLGKTSLARKLFNSSDVKESFEYRVWTNVSGECNTRDILMRIISSLEETSEGELEKMAQQELEVYLHDILQEKRYLVVVDDIWESEALESLKRALPCSYQGSRVIITTSIRVVAEGRDKRVYTHNIRFLTFKESWNLFEKKAFRYILKVDQELQKIGKEMVQKCGGLPRTTVVLAGLMSRKKPNEWNDVWSSLRVKDDNIHVSSLFDLSFKDMGHELKLCFLYLSVFPEDYEVDVEKLIQLLVAEGFIQEDEEMTMEDVARYYIEDLVYISLVEVVKRKKGKLMSFRIHDLVREFTIKKSKELNFVNVYDEQHSSTTSRREVVHHLMDDNYLCDRRVNTQMRSFLFFGKRRNDITYVETITLKLKLLRVLNLGGLHFICQGYSPWSLPDVIGGLVHLRYLGIADTVVNNLPDFISNLRFLQTLDASGNSFERMTDLSNLTSLRHLTGRFIGELLIGDAVNLQTLRSISSYSWSKLKHELLINLRDLEIYEFHILNDQIKVPLDLVSLSKLKNLRVLKIEVVSFSLFSEETVRFELLVKLTLHCDVRRLPRDMDLIFPSLESLTLVTNLQEDPMPTLQKLQRLENLVLYSCVYPGAKMFINAQGFGRLRKLKVIIKRLDELEIEEEAMPCLMKLNLDNKDGATKLMIPDRMRAFV.

Residues 26–42 (GVKDDLEELKTELTCIQ) adopt a coiled-coil conformation. The NB-ARC domain occupies 142-446 (STSRVREVRR…AEGFIQEDEE (305 aa)). ATP is bound at residue 191–198 (GMEGLGKT). 5 LRR repeats span residues 587-610 (LVHL…ISNL), 612-634 (FLQT…NLTS), 703-726 (LKNL…TVRF), 749-774 (FPSL…KLQR), and 807-830 (IKRL…NLDN).

It belongs to the disease resistance NB-LRR family. RPP13 subfamily.

Functionally, potential disease resistance protein. This Arabidopsis thaliana (Mouse-ear cress) protein is Putative disease resistance RPP13-like protein 2 (RPP13L2).